Consider the following 229-residue polypeptide: UPF0500 protein C1orf216 (229 aa).

Positions 1–144 (MFAIQPGLAE…RGPGPPDPLL (144 aa)) are disordered. Residues 62 to 71 (SESPSDNQAF) show a composition bias toward polar residues. Low complexity-rich tracts occupy residues 84 to 93 (PPEGAEIPGA) and 115 to 126 (SSSLSIDSRSSS).

The protein belongs to the UPF0500 family.

This Homo sapiens (Human) protein is UPF0500 protein C1orf216 (C1orf216).